Reading from the N-terminus, the 598-residue chain is MLKTHSCALTQENVGTEVTLAGWVHRRRDHGGVIFIDLRDREGIVQVIFNPEQSAACLDIGKELRSEYVLQVKGVVSHRPAGTENNRMPSGMVEVVAVNAKILNAAKTPPFYINEEVEVDESLRLKYRYLDIRRQGMKNNLIIRHKAVRFMREFLNDQGFIEIETPILIKSTPEGARDYLVPSRLFPGKFFALPQSPQQLKQLLMVAGMEKYYQVARCFRDEDLRADRQPEFTQLDMEMSFVDEEDMMKLMEDLFTGLVANVRPDMKYNKKFPRISFADAMEKYGCDKPDLRFGMELADITDIGASSAFGVFKNVAAQGGAIKAISAPGCGGYNKSQQEELINLAKKYGAAGLVPISLGVENGVLKDLTMEMVKSVAAKYLALEEIKTIAERSGAKPGDLILIVAGARKMVNTVLGEMRNQLAVKLNLCDKNELSFAFVVDFPLFQWDEEGKRWDSVHHPFTAPLESDMPLMDTDPGRVGSRAYDVVCNGYEIAGGSIRIHQADLQRKVFHLLGYNDEQIDERFGHLLEAFEFGAPPHGGVAPGIDRFVMLLAGETSIREVISFPKNQAAQDLLFGAPSVVDDKQIKDLHIRIQAEKE.

Position 174 (Glu174) interacts with L-aspartate. An aspartate region spans residues 198-201 (QQLK). L-aspartate is bound at residue Arg220. ATP is bound by residues 220–222 (RDE) and Gln229. His458 lines the L-aspartate pocket. ATP is bound at residue Glu492. An L-aspartate-binding site is contributed by Arg499. Residue 544–547 (GIDR) coordinates ATP.

This sequence belongs to the class-II aminoacyl-tRNA synthetase family. Type 1 subfamily. Homodimer.

The protein resides in the cytoplasm. The catalysed reaction is tRNA(Asx) + L-aspartate + ATP = L-aspartyl-tRNA(Asx) + AMP + diphosphate. Its function is as follows. Aspartyl-tRNA synthetase with relaxed tRNA specificity since it is able to aspartylate not only its cognate tRNA(Asp) but also tRNA(Asn). Reaction proceeds in two steps: L-aspartate is first activated by ATP to form Asp-AMP and then transferred to the acceptor end of tRNA(Asp/Asn). This is Aspartate--tRNA(Asp/Asn) ligase from Dehalococcoides mccartyi (strain CBDB1).